The sequence spans 944 residues: Protein phosphatase 1 regulatory subunit 37 homolog (944 aa).

A disordered region spans residues 42–71; it reads QQQSHSAATSVRKKTCQDANSSGEDPNGRI. 5 LRR repeats span residues 203 to 224, 232 to 255, 262 to 282, 290 to 311, and 318 to 338; these read SCVR…TTIF, SLQM…CKMA, SLTC…LVLI, GLRE…HIYQ, and SLQL…RHIC. Residues 517 to 598 form a disordered region; that stretch reads EEGDSGVEKK…KERHQRFVRS (82 aa). The span at 522 to 542 shows a compositional bias: basic and acidic residues; the sequence is GVEKKDGNECEGEDNKDRQDT. Polar residues-rich tracts occupy residues 543–554 and 567–585; these read PAETENGVSSNE and PESN…STSK. A compositionally biased stretch (basic residues) spans 586 to 595; sequence LSRKERHQRF.

Belongs to the PPP1R37 family.

The chain is Protein phosphatase 1 regulatory subunit 37 homolog from Caenorhabditis elegans.